A 338-amino-acid chain; its full sequence is 1-aminocyclopropane-1-carboxylate deaminase (338 aa).

An N6-(pyridoxal phosphate)lysine modification is found at lysine 51. Serine 78 serves as the catalytic Nucleophile.

This sequence belongs to the ACC deaminase/D-cysteine desulfhydrase family. In terms of assembly, homotrimer. Requires pyridoxal 5'-phosphate as cofactor.

The catalysed reaction is 1-aminocyclopropane-1-carboxylate + H2O = 2-oxobutanoate + NH4(+). Its function is as follows. Catalyzes a cyclopropane ring-opening reaction, the irreversible conversion of 1-aminocyclopropane-1-carboxylate (ACC) to ammonia and alpha-ketobutyrate. Allows growth on ACC as a nitrogen source. This chain is 1-aminocyclopropane-1-carboxylate deaminase, found in Burkholderia ambifaria (strain ATCC BAA-244 / DSM 16087 / CCUG 44356 / LMG 19182 / AMMD) (Burkholderia cepacia (strain AMMD)).